The following is a 529-amino-acid chain: Retinoic acid-induced protein 2 (529 aa).

Disordered stretches follow at residues 1-21 (MDDLQSQNLSMDMTDSPPTLA) and 400-419 (SHSSNSNGTEMVSQPSHPGS). The segment covering 407–416 (GTEMVSQPSH) has biased composition (polar residues).

The polypeptide is Retinoic acid-induced protein 2 (Rai2) (Mus musculus (Mouse)).